The sequence spans 299 residues: Acetylglutamate kinase (299 aa).

Substrate is bound by residues 72-73 (GG), Arg-94, and Asn-196.

The protein belongs to the acetylglutamate kinase family. ArgB subfamily.

It localises to the cytoplasm. It catalyses the reaction N-acetyl-L-glutamate + ATP = N-acetyl-L-glutamyl 5-phosphate + ADP. The protein operates within amino-acid biosynthesis; L-arginine biosynthesis; N(2)-acetyl-L-ornithine from L-glutamate: step 2/4. Functionally, catalyzes the ATP-dependent phosphorylation of N-acetyl-L-glutamate. The protein is Acetylglutamate kinase of Burkholderia cenocepacia (strain ATCC BAA-245 / DSM 16553 / LMG 16656 / NCTC 13227 / J2315 / CF5610) (Burkholderia cepacia (strain J2315)).